Reading from the N-terminus, the 101-residue chain is uncharacterized protein (101 aa).

The N-terminal stretch at Met1 to Ser27 is a signal peptide. The next 2 helical transmembrane spans lie at Leu42 to Phe64 and Thr79 to Leu98.

It is found in the cytoplasm. The protein resides in the nucleus membrane. This is an uncharacterized protein from Schizosaccharomyces pombe (strain 972 / ATCC 24843) (Fission yeast).